The following is a 1253-amino-acid chain: MTTHVTLEDALSNVDLLEELPLPDQQPCIEPPPSSIMYQANFDTNFEDRNAFVTGIARYIEQATVHSSMNEMLEEGHEYAVMLYTWRSCSRAIPQVKCNEQPNRVEIYEKTVEVLEPEVTKLMKFMYFQRKAIERFCSEVKRLCHAERRKDFVSEAYLLTLGKFINMFAVLDELKNMKCSVKNDHSAYKRAAQFLRKMADPQSIQESQNLSMFLANHNRITQCLHQQLEVIPGYEELLADIVNICVDYYENKMYLTPSEKHMLLKVMGFGLYLMDGNVSNIYKLDAKKRINLSKIDKFFKQLQVVPLFGDMQIELARYIETSAHYEENKSKWTCTQSSISPQYNICEQMVQIRDDHIRFISELARYSNSEVVTGSGLDSQKSDEEYRELFDLALRGLQLLSKWSAHVMEVYSWKLVHPTDKFCNKDCPGTAEEYERATRYNYTSEEKFAFVEVIAMIKGLQVLMGRMESVFNQAIRNTIYAALQDFAQVTLREPLRQAVRKKKNVLISVLQAIRKTICDWEGGREPPNDPCLRGEKDPKGGFDIKVPRRAVGPSSTQLYMVRTMLESLIADKSGSKKTLRSSLDGPIVLAIEDFHKQSFFFTHLLNISEALQQCCDLSQLWFREFFLELTMGRRIQFPIEMSMPWILTDHILETKEPSMMEYVLYPLDLYNDSAYYALTKFKKQFLYDEIEAEVNLCFDQFVYKLADQIFAYYKAMAGSVLLDKRFRAECKNYGVIIPYPPSNRYETLLKQRHVQLLGRSIDLNRLITQRISAAMYKSLDQAISRFESEDLTSIVELEWLLEINRLTHRLLCKHMTLDSFDAMFREANHNVSAPYGRITLHVFWELNFDFLPNYCYNGSTNRFVRTAIPFTQEPQRDKPANIQPYYLYGSKPLNIAYSHIYSSYRNFVGPPHFKTICRLLGYQGIAVVMEELLKIVESLLQGTILQYVKTLIEVMPKICRLPRHEYGSPGILEFFHHQLKDIIEYAELKTDVFQSLREVGNAILFCLLIEQALSQEEVCDLLHAAPFQNILPRVYIKEGERLEVRMKRLEAKYAPLHLVPLIERLGTPQQIAIAREGDLLTKERLCCGLSMFEVILTRIRSYLQDPIWRGPPPTNGVMHVDECVEFHRLWSAMQFVYCIPVGTNEFTAEQCFGDGLNWAGCSIIVLLGQQRRFDLFDFCYHLLKVQRQDGKDEIIKNVPLKKMADRIRKYQILNNEVFAILNKYMKSVETDSSTVEHVRCFQPPIHQSLATTC.

The residue at position 1037 (Lys1037) is an N6-acetyllysine.

This sequence belongs to the CYFIP family. In terms of assembly, component of the WAVE1 complex composed of ABI2, CYFIP2, BRK1, NCKAP1 and WASF1/WAVE1. Interacts with RAC1 (activated form) which causes the complex to dissociate, releasing activated WASF1. The complex can also be activated by NCK1. Interacts with SHANK3; the interaction mediates the association of SHANK3 with the WAVE1 complex. Interacts with FMR1; the interaction occurs in a RNA-dependent manner. Interacts with FXR1 and FXR2. Interacts with TMEM108 (via N-terminus); the interaction associates TMEM108 with the WAVE1 complex.

The protein resides in the cytoplasm. Its subcellular location is the nucleus. The protein localises to the perinuclear region. It is found in the synapse. It localises to the synaptosome. Involved in T-cell adhesion and p53-dependent induction of apoptosis. Does not bind RNA. As component of the WAVE1 complex, required for BDNF-NTRK2 endocytic trafficking and signaling from early endosomes. This chain is Cytoplasmic FMR1-interacting protein 2, found in Pongo abelii (Sumatran orangutan).